Consider the following 355-residue polypeptide: Peptide chain release factor 1 (355 aa).

N5-methylglutamine is present on glutamine 231. Positions 283–292 (IAKETSERKS) are enriched in basic and acidic residues. The segment at 283 to 303 (IAKETSERKSQVGTGDRSGRI) is disordered.

It belongs to the prokaryotic/mitochondrial release factor family. Post-translationally, methylated by PrmC. Methylation increases the termination efficiency of RF1.

The protein resides in the cytoplasm. Its function is as follows. Peptide chain release factor 1 directs the termination of translation in response to the peptide chain termination codons UAG and UAA. The protein is Peptide chain release factor 1 of Campylobacter curvus (strain 525.92).